A 473-amino-acid chain; its full sequence is Serine palmitoyltransferase 1 (473 aa).

Over 1–15 (MATATEQWVLVEMVQ) the chain is Lumenal. Residues 1-66 (MATATEQWVL…KEELIEEWQP (66 aa)) are interaction with SPTLC2. A helical transmembrane segment spans residues 16 to 36 (ALYEAPAYHLILEGILILWII). Topologically, residues 37–473 (RLLFSKTYKL…IKEVAQAVLL (437 aa)) are cytoplasmic. Tyrosine 164 bears the Phosphotyrosine; by ABL mark.

Belongs to the class-II pyridoxal-phosphate-dependent aminotransferase family. In terms of assembly, component of the serine palmitoyltransferase (SPT) complex, which is also composed of SPTLC2 or SPTLC3 and SPTSSA or SPTSSB. The heterodimer with SPTLC2 or SPTLC3 forms the catalytic core of the enzyme, while SPTSSA or SPTSSB subunits determine substrate specificity. SPT also interacts with ORMDL proteins, especially ORMDL3, which negatively regulate SPT activity in the presence of ceramides. Forms dimers of heterodimers with SPTLC2. Interacts with RTN4. The cofactor is pyridoxal 5'-phosphate. Post-translationally, phosphorylation at Tyr-164 inhibits activity and promotes cell survival.

It localises to the endoplasmic reticulum membrane. It catalyses the reaction L-serine + hexadecanoyl-CoA + H(+) = 3-oxosphinganine + CO2 + CoA. The catalysed reaction is octadecanoyl-CoA + L-serine + H(+) = 3-oxoeicosasphinganine + CO2 + CoA. It carries out the reaction tetradecanoyl-CoA + L-serine + H(+) = 3-oxohexadecasphinganine + CO2 + CoA. The enzyme catalyses dodecanoyl-CoA + L-serine + H(+) = 3-oxotetradecasphinganine + CO2 + CoA. It functions in the pathway lipid metabolism; sphingolipid metabolism. Its activity is regulated as follows. SPT complex catalytic activity is negatively regulated by ORMDL proteins, including ORMDL3, in the presence of ceramides. This mechanism allows to maintain ceramide levels at sufficient concentrations for the production of complex sphingolipids, but which prevents the accumulation of ceramides to levels that trigger apoptosis. Component of the serine palmitoyltransferase multisubunit enzyme (SPT) that catalyzes the initial and rate-limiting step in sphingolipid biosynthesis by condensing L-serine and activated acyl-CoA (most commonly palmitoyl-CoA) to form long-chain bases. The SPT complex is also composed of SPTLC2 or SPTLC3 and SPTSSA or SPTSSB. Within this complex, the heterodimer with SPTLC2 or SPTLC3 forms the catalytic core. The composition of the serine palmitoyltransferase (SPT) complex determines the substrate preference. The SPTLC1-SPTLC2-SPTSSA complex shows a strong preference for C16-CoA substrate, while the SPTLC1-SPTLC3-SPTSSA isozyme uses both C14-CoA and C16-CoA as substrates, with a slight preference for C14-CoA. The SPTLC1-SPTLC2-SPTSSB complex shows a strong preference for C18-CoA substrate, while the SPTLC1-SPTLC3-SPTSSB isozyme displays an ability to use a broader range of acyl-CoAs, without apparent preference. Required for adipocyte cell viability and metabolic homeostasis. This chain is Serine palmitoyltransferase 1 (SPTLC1), found in Macaca fascicularis (Crab-eating macaque).